We begin with the raw amino-acid sequence, 367 residues long: Glutamate 5-kinase (367 aa).

Position 10 (Lys10) interacts with ATP. Ser50, Asp137, and Asn149 together coordinate substrate. Residues 169 to 170 and 211 to 217 contribute to the ATP site; these read TD and TGGMSTK. Positions 275-353 constitute a PUA domain; sequence AGEITVDEGA…QQIDAILGYE (79 aa).

It belongs to the glutamate 5-kinase family.

The protein resides in the cytoplasm. The enzyme catalyses L-glutamate + ATP = L-glutamyl 5-phosphate + ADP. Its pathway is amino-acid biosynthesis; L-proline biosynthesis; L-glutamate 5-semialdehyde from L-glutamate: step 1/2. Catalyzes the transfer of a phosphate group to glutamate to form L-glutamate 5-phosphate. The protein is Glutamate 5-kinase of Salmonella arizonae (strain ATCC BAA-731 / CDC346-86 / RSK2980).